The following is a 278-amino-acid chain: Large ribosomal subunit protein uL2 (278 aa).

The disordered stretch occupies residues 223-278; it reads GVAMNPIDHPHGGGEGRTSGGRHPVTPWGFPTKGKKTRSNKRTDTFIVSSRHNRKK.

Belongs to the universal ribosomal protein uL2 family. In terms of assembly, part of the 50S ribosomal subunit. Forms a bridge to the 30S subunit in the 70S ribosome.

In terms of biological role, one of the primary rRNA binding proteins. Required for association of the 30S and 50S subunits to form the 70S ribosome, for tRNA binding and peptide bond formation. It has been suggested to have peptidyltransferase activity; this is somewhat controversial. Makes several contacts with the 16S rRNA in the 70S ribosome. In Methylobacterium nodulans (strain LMG 21967 / CNCM I-2342 / ORS 2060), this protein is Large ribosomal subunit protein uL2.